We begin with the raw amino-acid sequence, 341 residues long: Anthranilate phosphoribosyltransferase (341 aa).

5-phospho-alpha-D-ribose 1-diphosphate is bound by residues G81, G84–D85, T89, N91–T94, K109–G117, and S121. G81 lines the anthranilate pocket. S93 contributes to the Mg(2+) binding site. An anthranilate-binding site is contributed by R167. Mg(2+) is bound by residues D226 and E227.

Belongs to the anthranilate phosphoribosyltransferase family. In terms of assembly, homodimer. It depends on Mg(2+) as a cofactor.

The enzyme catalyses N-(5-phospho-beta-D-ribosyl)anthranilate + diphosphate = 5-phospho-alpha-D-ribose 1-diphosphate + anthranilate. It participates in amino-acid biosynthesis; L-tryptophan biosynthesis; L-tryptophan from chorismate: step 2/5. Catalyzes the transfer of the phosphoribosyl group of 5-phosphorylribose-1-pyrophosphate (PRPP) to anthranilate to yield N-(5'-phosphoribosyl)-anthranilate (PRA). This chain is Anthranilate phosphoribosyltransferase, found in Methylococcus capsulatus (strain ATCC 33009 / NCIMB 11132 / Bath).